The following is a 117-amino-acid chain: Ribosomal silencing factor RsfS (117 aa).

The protein belongs to the Iojap/RsfS family. In terms of assembly, interacts with ribosomal protein uL14 (rplN).

It localises to the cytoplasm. Functions as a ribosomal silencing factor. Interacts with ribosomal protein uL14 (rplN), blocking formation of intersubunit bridge B8. Prevents association of the 30S and 50S ribosomal subunits and the formation of functional ribosomes, thus repressing translation. In Halalkalibacterium halodurans (strain ATCC BAA-125 / DSM 18197 / FERM 7344 / JCM 9153 / C-125) (Bacillus halodurans), this protein is Ribosomal silencing factor RsfS.